The following is a 238-amino-acid chain: Ribosomal RNA small subunit methyltransferase G (238 aa).

S-adenosyl-L-methionine contacts are provided by residues G77, F82, 128–129 (AE), and R147. A disordered region spans residues 219–238 (RQTPKKYPRKAGLPNKEPIE).

This sequence belongs to the methyltransferase superfamily. RNA methyltransferase RsmG family.

Its subcellular location is the cytoplasm. Its function is as follows. Specifically methylates the N7 position of guanine in position 535 of 16S rRNA. This is Ribosomal RNA small subunit methyltransferase G from Oceanobacillus iheyensis (strain DSM 14371 / CIP 107618 / JCM 11309 / KCTC 3954 / HTE831).